The sequence spans 356 residues: DNA polymerase IV (356 aa).

A UmuC domain is found at 1 to 188; the sequence is MDTSRKIIHI…IPVTKFYGVG (188 aa). Mg(2+) contacts are provided by D11 and D106. E107 is a catalytic residue.

This sequence belongs to the DNA polymerase type-Y family. Monomer. Mg(2+) serves as cofactor.

Its subcellular location is the cytoplasm. It catalyses the reaction DNA(n) + a 2'-deoxyribonucleoside 5'-triphosphate = DNA(n+1) + diphosphate. Functionally, poorly processive, error-prone DNA polymerase involved in untargeted mutagenesis. Copies undamaged DNA at stalled replication forks, which arise in vivo from mismatched or misaligned primer ends. These misaligned primers can be extended by PolIV. Exhibits no 3'-5' exonuclease (proofreading) activity. May be involved in translesional synthesis, in conjunction with the beta clamp from PolIII. In Listeria monocytogenes serotype 4b (strain F2365), this protein is DNA polymerase IV.